Here is a 430-residue protein sequence, read N- to C-terminus: Gustatory receptor-like 43a (430 aa).

Over 1 to 31 the chain is Cytoplasmic; that stretch reads MSTGSHSPEAMWSATNFRRHQRKPNQVLHRW. The helical transmembrane segment at 32-52 threads the bilayer; sequence FFKGSAWIIYAIACGLHFFKL. At 53–79 the chain is on the extracellular side; the sequence is HYNERTNQVEESQYHRIWSKIVVVLKV. A helical transmembrane segment spans residues 80 to 100; sequence ILLASPYLQYFVLGLGIYIHI. Residues 101 to 110 lie on the Cytoplasmic side of the membrane; sequence TLVQDSKAQN. The helical transmembrane segment at 111 to 131 threads the bilayer; the sequence is FLMSLIVLGIVIGVLRRLLIF. Residues 132–168 lie on the Extracellular side of the membrane; sequence LHLKRDRRFLKHTVNEILHITSALEQKFGMEYKCDST. A helical membrane pass occupies residues 169–189; sequence LLVVYLAKLWILTVMLDSLWY. Topologically, residues 190-277 are cytoplasmic; it reads KPYFLSSIFL…RDNVSWLSTS (88 aa). A helical membrane pass occupies residues 278–298; that stretch reads VYLMIFTCIFNAELLIECSLF. Residues 299 to 306 lie on the Extracellular side of the membrane; it reads AGDELENK. Residues 307–327 traverse the membrane as a helical segment; sequence IYIITDGCLGPVCVPILYVLI. At 328-396 the chain is on the cytoplasmic side; sequence LGMCTDRFRD…IILDITCDRE (69 aa). The helical transmembrane segment at 397–417 threads the bilayer; sequence FVMDYIVTVILTALSLVQYTI. The Extracellular segment spans residues 418 to 430; the sequence is STGGNISECVTHK. Residue asparagine 422 is glycosylated (N-linked (GlcNAc...) asparagine).

Its subcellular location is the cell membrane. The polypeptide is Gustatory receptor-like 43a (Drosophila melanogaster (Fruit fly)).